Here is an 85-residue protein sequence, read N- to C-terminus: Small ribosomal subunit protein uS17 (85 aa).

The protein belongs to the universal ribosomal protein uS17 family. In terms of assembly, part of the 30S ribosomal subunit.

Functionally, one of the primary rRNA binding proteins, it binds specifically to the 5'-end of 16S ribosomal RNA. The protein is Small ribosomal subunit protein uS17 of Desulforapulum autotrophicum (strain ATCC 43914 / DSM 3382 / VKM B-1955 / HRM2) (Desulfobacterium autotrophicum).